Consider the following 419-residue polypeptide: Cysteine desulfurase (419 aa).

Residues Ala-69–Thr-70, Asn-157, Gln-185, and Ser-205–His-207 contribute to the pyridoxal 5'-phosphate site. Lys-208 carries the N6-(pyridoxal phosphate)lysine modification. Thr-245 lines the pyridoxal 5'-phosphate pocket. Cys-333 acts as the Cysteine persulfide intermediate in catalysis. Residue Cys-333 participates in [2Fe-2S] cluster binding. Positions Thr-392–Ser-419 are disordered. The segment covering Ala-404–Ser-413 has biased composition (polar residues).

It belongs to the class-V pyridoxal-phosphate-dependent aminotransferase family. NifS/IscS subfamily. Homodimer. Pyridoxal 5'-phosphate is required as a cofactor.

The enzyme catalyses (sulfur carrier)-H + L-cysteine = (sulfur carrier)-SH + L-alanine. In terms of biological role, catalyzes the removal of elemental sulfur atoms from cysteine to produce alanine. Seems to participate in the biosynthesis of the nitrogenase metalloclusters by providing the inorganic sulfur required for the Fe-S core formation. The sequence is that of Cysteine desulfurase from Frankia sp. (strain EuIK1).